The primary structure comprises 189 residues: Interferon alpha-B (189 aa).

Residues 1-23 (MAPAWSFLLALLLLSCNAICSLG) form the signal peptide. Cystine bridges form between Cys24/Cys122 and Cys52/Cys162.

The protein belongs to the alpha/beta interferon family.

The protein resides in the secreted. Produced by macrophages, IFN-alpha have antiviral activities. Interferon stimulates the production of two enzymes: a protein kinase and an oligoadenylate synthetase. The protein is Interferon alpha-B (IFNAB) of Bos taurus (Bovine).